A 309-amino-acid polypeptide reads, in one-letter code: Carboxylesterase Culp6 homolog (309 aa).

The chain crosses the membrane as a helical span at residues 5–25; sequence ITVIAVLIVLALIGVGIVQYV. A disulfide bridge connects residues Cys55 and Cys146. Catalysis depends on residues Ser157, Asp253, and His279. Cysteines 249 and 256 form a disulfide.

The protein belongs to the cutinase family.

The protein resides in the cell membrane. It catalyses the reaction a butanoate ester + H2O = an aliphatic alcohol + butanoate + H(+). Inhibited by tetrahydrolipstatin (THL), a specific lipase inhibitor. Esterase that may be involved in cell wall biosynthesis and/or maintenance. Hydrolyzes pNP-butyrate (C4). This chain is Carboxylesterase Culp6 homolog, found in Corynebacterium glutamicum (strain ATCC 13032 / DSM 20300 / JCM 1318 / BCRC 11384 / CCUG 27702 / LMG 3730 / NBRC 12168 / NCIMB 10025 / NRRL B-2784 / 534).